Reading from the N-terminus, the 208-residue chain is Putative 3-methyladenine DNA glycosylase (208 aa).

It belongs to the DNA glycosylase MPG family.

The chain is Putative 3-methyladenine DNA glycosylase from Prosthecochloris aestuarii (strain DSM 271 / SK 413).